Consider the following 88-residue polypeptide: MSRSLRKGPFVDHHLLKKVRDMNALEKKTPIKTWSRRSMITPEMIGHTFEVHNGRKFLTVFVSETMVGHKLGEFSPTRMFKSHPVKKG.

Belongs to the universal ribosomal protein uS19 family.

Protein S19 forms a complex with S13 that binds strongly to the 16S ribosomal RNA. This Chlamydia muridarum (strain MoPn / Nigg) protein is Small ribosomal subunit protein uS19 (rpsS).